The sequence spans 104 residues: Large ribosomal subunit protein bL21 (104 aa).

Belongs to the bacterial ribosomal protein bL21 family. Part of the 50S ribosomal subunit. Contacts protein L20.

Functionally, this protein binds to 23S rRNA in the presence of protein L20. The protein is Large ribosomal subunit protein bL21 of Streptococcus thermophilus (strain ATCC BAA-491 / LMD-9).